A 1329-amino-acid chain; its full sequence is Putative protein tag-53 (1329 aa).

The region spanning Ser-65–Asp-92 is the EGF-like 1 domain. 5 disulfides stabilise this stretch: Cys-66–Cys-75, Cys-70–Cys-80, Cys-82–Cys-91, Cys-94–Cys-120, and Cys-144–Cys-166. Positions Cys-94–Asn-203 constitute a CUB domain. A glycan (N-linked (GlcNAc...) asparagine) is linked at Asn-103. Asn-197 and Asn-208 each carry an N-linked (GlcNAc...) asparagine glycan. EGF-like domains lie at Arg-204 to Glu-232 and Val-235 to Gln-270. Disulfide bonds link Cys-205–Cys-215, Cys-209–Cys-220, Cys-222–Cys-231, Cys-236–Cys-252, Cys-247–Cys-257, and Cys-259–Cys-269. Kelch repeat units lie at residues Val-302–Asn-353, Leu-355–His-408, Glu-416–Tyr-463, Ala-471–Gly-518, Met-520–Gln-575, and Leu-577–Phe-619. 6 N-linked (GlcNAc...) asparagine glycosylation sites follow: Asn-324, Asn-395, Asn-447, Asn-481, Asn-529, and Asn-555. Asn-820 carries N-linked (GlcNAc...) asparagine glycosylation. Residue Asn-832 is glycosylated (N-linked (GlcNAc...) asparagine; atypical). N-linked (GlcNAc...) asparagine glycosylation is found at Asn-833 and Asn-934. Disulfide bonds link Cys-945/Cys-953, Cys-947/Cys-968, Cys-971/Cys-980, Cys-983/Cys-997, Cys-1000/Cys-1009, Cys-1002/Cys-1016, Cys-1018/Cys-1028, and Cys-1031/Cys-1045. 2 Laminin EGF-like domains span residues Cys-945–Pro-999 and Cys-1000–Tyr-1047. Positions Thr-952 to Ser-998 constitute an EGF-like 4 domain. Asn-973 is a glycosylation site (N-linked (GlcNAc...) asparagine). N-linked (GlcNAc...) asparagine glycosylation is found at Asn-1066, Asn-1102, and Asn-1147. A helical membrane pass occupies residues Val-1176–Leu-1196. Over Trp-1197–Asp-1329 the chain is Cytoplasmic.

It localises to the membrane. In Caenorhabditis elegans, this protein is Putative protein tag-53 (tag-53).